A 23-amino-acid polypeptide reads, in one-letter code: Putative gene 50 protein (23 aa).

The polypeptide is Putative gene 50 protein (50) (Bacillus subtilis (Bacteriophage SP01)).